We begin with the raw amino-acid sequence, 598 residues long: DNA ligase (598 aa).

D258 lines the ATP pocket. Catalysis depends on K260, which acts as the N6-AMP-lysine intermediate. ATP is bound by residues R265, R280, E310, F350, R427, and K433.

The protein belongs to the ATP-dependent DNA ligase family. Requires Mg(2+) as cofactor.

The catalysed reaction is ATP + (deoxyribonucleotide)n-3'-hydroxyl + 5'-phospho-(deoxyribonucleotide)m = (deoxyribonucleotide)n+m + AMP + diphosphate.. In terms of biological role, DNA ligase that seals nicks in double-stranded DNA during DNA replication, DNA recombination and DNA repair. This Sulfolobus acidocaldarius (strain ATCC 33909 / DSM 639 / JCM 8929 / NBRC 15157 / NCIMB 11770) protein is DNA ligase.